Consider the following 184-residue polypeptide: Putative manganese efflux pump MntP (184 aa).

A run of 6 helical transmembrane segments spans residues 3 to 23 (LLSM…ISVS), 36 to 56 (ALIS…LGWV), 65 to 85 (VSAL…LKMI), 103 to 123 (LLVL…SFAL), 126 to 146 (ISIW…SLAG), and 163 to 183 (ALGG…NVSF).

This sequence belongs to the MntP (TC 9.B.29) family.

Its subcellular location is the cell membrane. Functionally, probably functions as a manganese efflux pump. This Methanothermobacter thermautotrophicus (strain ATCC 29096 / DSM 1053 / JCM 10044 / NBRC 100330 / Delta H) (Methanobacterium thermoautotrophicum) protein is Putative manganese efflux pump MntP.